A 660-amino-acid chain; its full sequence is tRNA 5-methylaminomethyl-2-thiouridine biosynthesis bifunctional protein MnmC (660 aa).

The tract at residues 1-242 (MTDRIVPATL…KRAMLVGEFA (242 aa)) is tRNA (mnm(5)s(2)U34)-methyltransferase. An FAD-dependent cmnm(5)s(2)U34 oxidoreductase region spans residues 266-660 (IGAGLAGCAV…VRALRHGRVA (395 aa)).

The protein in the N-terminal section; belongs to the methyltransferase superfamily. tRNA (mnm(5)s(2)U34)-methyltransferase family. In the C-terminal section; belongs to the DAO family. Requires FAD as cofactor.

It localises to the cytoplasm. It catalyses the reaction 5-aminomethyl-2-thiouridine(34) in tRNA + S-adenosyl-L-methionine = 5-methylaminomethyl-2-thiouridine(34) in tRNA + S-adenosyl-L-homocysteine + H(+). Catalyzes the last two steps in the biosynthesis of 5-methylaminomethyl-2-thiouridine (mnm(5)s(2)U) at the wobble position (U34) in tRNA. Catalyzes the FAD-dependent demodification of cmnm(5)s(2)U34 to nm(5)s(2)U34, followed by the transfer of a methyl group from S-adenosyl-L-methionine to nm(5)s(2)U34, to form mnm(5)s(2)U34. The chain is tRNA 5-methylaminomethyl-2-thiouridine biosynthesis bifunctional protein MnmC from Burkholderia pseudomallei (strain 1710b).